Here is a 511-residue protein sequence, read N- to C-terminus: 2-isopropylmalate synthase (511 aa).

In terms of domain architecture, Pyruvate carboxyltransferase spans 5-267 (LFIFDTTLRD…DTRIDATQIV (263 aa)). Mn(2+)-binding residues include Asp-14, His-202, His-204, and Asn-238. The regulatory domain stretch occupies residues 393–511 (KLLSMKVCSE…SKRERAHPQV (119 aa)).

This sequence belongs to the alpha-IPM synthase/homocitrate synthase family. LeuA type 1 subfamily. Homodimer. Requires Mn(2+) as cofactor.

The protein resides in the cytoplasm. The catalysed reaction is 3-methyl-2-oxobutanoate + acetyl-CoA + H2O = (2S)-2-isopropylmalate + CoA + H(+). Its pathway is amino-acid biosynthesis; L-leucine biosynthesis; L-leucine from 3-methyl-2-oxobutanoate: step 1/4. Functionally, catalyzes the condensation of the acetyl group of acetyl-CoA with 3-methyl-2-oxobutanoate (2-ketoisovalerate) to form 3-carboxy-3-hydroxy-4-methylpentanoate (2-isopropylmalate). In Thiobacillus denitrificans (strain ATCC 25259 / T1), this protein is 2-isopropylmalate synthase.